The following is a 723-amino-acid chain: MTGKKKNRHQKKSSQDHNNEPLTEIDQTTDETTTTTTTTTTTTEEETKNENTIVENKDEDKKVEESVQEKEEEKEKEKEKEKEKEKEKEKEKEKENNIEKEEEKKEEEKEEKNVEKEEEKEEKQTKTDDNMWNNEDEIDVPTVEGEIETDIKDEKKEEKKKVEKEIEDPNKKYFIKQKKIIKRKKEKKVKPQPVQPTPPVPAPAPQQSSGWGNWFSSIGNAVSNTITQIARVDLDDSDEDSEEEIMVEEDIEVSKKEYERYHRKKLGLPLSDTEDSDNDNDNGGDDNDNAIMNAIDNGVFKTADMIADSLYFAGSFLSSGFKTVQDNANIENVKGLTQEVSNISLDTKNKISNSELYEKSQKIASQMMDSSVDALESVGQRAYSMFSTQMKNKSNNDENNNNNNNNNQQQPQQQQTTSPTLSTSPTSPKSPTTTTTNTTTTTTTNTNNNNNNTSTNYEFNINESIFEAGEFDSSKCAEHFNITKFIQDIEKLSVESTMKAHQINRKVISTSSIKSSVDLVLNEIKELFENEELPENLSNSNTLSFSNIHIFEIEKKYREFFDKLQEFTPQLKNQSIELGLCRGLEKIYQLTAIGLELISTIASSIPDEKAPSDVTNNNNNNNNTGEWAISKSNEILFTITKITQDIKLISAMLTEIIKSKQTPNSRKLLNNLHVETTNAISYIQDTKGGFVNICQIMYLNEIKFSLKGPTSPISTPNRKQQKS.

Over residues 1–12 the composition is skewed to basic residues; sequence MTGKKKNRHQKK. Disordered regions lie at residues 1–166, 181–212, 268–289, and 391–455; these read MTGK…EKEI, IKRK…SGWG, LPLS…DNDN, and KNKS…NTST. Low complexity predominate over residues 30-42; that stretch reads DETTTTTTTTTTT. Basic and acidic residues-rich tracts occupy residues 45-129 and 149-166; these read EETK…KTDD and TDIK…EKEI. Residues 53-173 are a coiled coil; it reads IVENKDEDKK…KEIEDPNKKY (121 aa). The span at 181–190 shows a compositional bias: basic residues; the sequence is IKRKKEKKVK. Positions 193 to 204 are enriched in pro residues; that stretch reads PVQPTPPVPAPA. Over residues 272 to 288 the composition is skewed to acidic residues; that stretch reads DTEDSDNDNDNGGDDND. Low complexity predominate over residues 397-455; sequence DENNNNNNNNNQQQPQQQQTTSPTLSTSPTSPKSPTTTTTNTTTTTTTNTNNNNNNTST.

This is an uncharacterized protein from Dictyostelium discoideum (Social amoeba).